Here is a 568-residue protein sequence, read N- to C-terminus: Probable inactive poly [ADP-ribose] polymerase SRO1 (568 aa).

Basic and acidic residues predominate over residues methionine 1 to glycine 18. Residues methionine 1–serine 32 are disordered. One can recognise a WWE domain in the interval arginine 77 to tryptophan 152. 2 disordered regions span residues aspartate 220–serine 241 and isoleucine 453–arginine 500. Positions aspartate 245–serine 463 constitute a PARP catalytic domain. The RST domain maps to arginine 497 to glycine 568.

As to quaternary structure, interacts with DREB2A, DREB2B, DREB2C and NAC082. As to expression, expressed in young developing tissues, such as young leaves and flowers and root tips. In mature plants, expressed in vasculature of leaves and roots.

The protein resides in the nucleus matrix. In terms of biological role, probable inactive ADP-ribosyltransferase that functions with RCD1 to regulate oxidative stress, hormonal and developmental responses. May regulate some stress-responsive genes. Seems to play a smaller developmental role than R. This Arabidopsis thaliana (Mouse-ear cress) protein is Probable inactive poly [ADP-ribose] polymerase SRO1 (SRO1).